The primary structure comprises 472 residues: Cell division protein FtsP (472 aa).

A signal peptide (tat-type signal) is located at residues 1–32; that stretch reads MSLSRRRFIQASGLALCAGGLPLQARASGAQA.

It belongs to the FtsP family. In terms of processing, predicted to be exported by the Tat system. The position of the signal peptide cleavage has not been experimentally proven.

Its subcellular location is the periplasm. Cell division protein that is required for growth during stress conditions. May be involved in protecting or stabilizing the divisomal assembly under conditions of stress. This chain is Cell division protein FtsP, found in Edwardsiella tarda (strain FL6-60).